Here is a 126-residue protein sequence, read N- to C-terminus: MAITKEEVISFIENMSVLELANLVKELEEKFGVSAAAPVAVAAAGPAAGPAEAAEEKTEFDVILKSAGANKIAVIKVVRALTSLGLKEAKDLVDGAPQPVKTGISKEEAADAQKQLVEAGAEVEVK.

This sequence belongs to the bacterial ribosomal protein bL12 family. Homodimer. Part of the ribosomal stalk of the 50S ribosomal subunit. Forms a multimeric L10(L12)X complex, where L10 forms an elongated spine to which 2 to 4 L12 dimers bind in a sequential fashion. Binds GTP-bound translation factors.

In terms of biological role, forms part of the ribosomal stalk which helps the ribosome interact with GTP-bound translation factors. Is thus essential for accurate translation. This Geobacter sp. (strain M21) protein is Large ribosomal subunit protein bL12.